The sequence spans 226 residues: ATP-dependent dethiobiotin synthetase BioD (226 aa).

Gly12–Val17 is an ATP binding site. Thr16 lines the Mg(2+) pocket. Residue Lys37 is part of the active site. Thr41 contacts substrate. ATP contacts are provided by residues Asp49, Glu108 to Gly111, Gly169 to Ser170, and Pro197 to Gly199. Residues Asp49 and Glu108 each contribute to the Mg(2+) site.

Belongs to the dethiobiotin synthetase family. As to quaternary structure, homodimer. Mg(2+) serves as cofactor.

It localises to the cytoplasm. The catalysed reaction is (7R,8S)-7,8-diammoniononanoate + CO2 + ATP = (4R,5S)-dethiobiotin + ADP + phosphate + 3 H(+). Its pathway is cofactor biosynthesis; biotin biosynthesis; biotin from 7,8-diaminononanoate: step 1/2. Catalyzes a mechanistically unusual reaction, the ATP-dependent insertion of CO2 between the N7 and N8 nitrogen atoms of 7,8-diaminopelargonic acid (DAPA, also called 7,8-diammoniononanoate) to form a ureido ring. This is ATP-dependent dethiobiotin synthetase BioD from Mycolicibacterium gilvum (strain PYR-GCK) (Mycobacterium gilvum (strain PYR-GCK)).